The primary structure comprises 163 residues: NADH-quinone oxidoreductase subunit I 1 (163 aa).

2 4Fe-4S ferredoxin-type domains span residues leucine 53–glycine 83 and valine 94–asparagine 123. Positions 63, 66, 69, 73, 103, 106, 109, and 113 each coordinate [4Fe-4S] cluster.

The protein belongs to the complex I 23 kDa subunit family. NDH-1 is composed of 14 different subunits. Subunits NuoA, H, J, K, L, M, N constitute the membrane sector of the complex. The cofactor is [4Fe-4S] cluster.

Its subcellular location is the cell inner membrane. The enzyme catalyses a quinone + NADH + 5 H(+)(in) = a quinol + NAD(+) + 4 H(+)(out). Functionally, NDH-1 shuttles electrons from NADH, via FMN and iron-sulfur (Fe-S) centers, to quinones in the respiratory chain. The immediate electron acceptor for the enzyme in this species is believed to be ubiquinone. Couples the redox reaction to proton translocation (for every two electrons transferred, four hydrogen ions are translocated across the cytoplasmic membrane), and thus conserves the redox energy in a proton gradient. In Rhizobium etli (strain ATCC 51251 / DSM 11541 / JCM 21823 / NBRC 15573 / CFN 42), this protein is NADH-quinone oxidoreductase subunit I 1.